An 87-amino-acid polypeptide reads, in one-letter code: Phytosulfokines 2 (87 aa).

A signal peptide spans methionine 1–alanine 22. Residues arginine 23–aspartate 77 constitute a propeptide that is removed on maturation. Tyrosine 78 and tyrosine 80 each carry sulfotyrosine. Residues lysine 83–proline 87 constitute a propeptide that is removed on maturation.

Belongs to the phytosulfokine family. In terms of processing, sulfation is important for activity and for the binding to a putative membrane receptor. Post-translationally, PSK-beta is an enzymatic derivative of PSK-alpha. In terms of tissue distribution, expressed in stems, roots and leaves.

It localises to the secreted. Functionally, promotes plant cell differentiation, organogenesis and somatic embryogenesis as well as cell proliferation. In Arabidopsis thaliana (Mouse-ear cress), this protein is Phytosulfokines 2 (PSK2).